A 184-amino-acid chain; its full sequence is Ribosome-recycling factor (184 aa).

This sequence belongs to the RRF family.

The protein resides in the cytoplasm. In terms of biological role, responsible for the release of ribosomes from messenger RNA at the termination of protein biosynthesis. May increase the efficiency of translation by recycling ribosomes from one round of translation to another. This Onion yellows phytoplasma (strain OY-M) protein is Ribosome-recycling factor.